Reading from the N-terminus, the 183-residue chain is Cuticle protein 2 (183 aa).

A signal peptide spans 1-15; the sequence is MKLIVVAALIGVCAG. The 64-residue stretch at 58 to 121 folds into the Chitin-binding type R&amp;R domain; it reads SQGFQYVYDT…AQGAHLPTPP (64 aa).

This is Cuticle protein 2 from Lonomia obliqua (Moth).